The sequence spans 328 residues: 4-hydroxythreonine-4-phosphate dehydrogenase (328 aa).

Residues His135 and Thr136 each contribute to the substrate site. Residues His165, His210, and His265 each coordinate a divalent metal cation. The substrate site is built by Lys273, Asn282, and Arg291.

The protein belongs to the PdxA family. In terms of assembly, homodimer. It depends on Zn(2+) as a cofactor. Mg(2+) serves as cofactor. Requires Co(2+) as cofactor.

The protein localises to the cytoplasm. It catalyses the reaction 4-(phosphooxy)-L-threonine + NAD(+) = 3-amino-2-oxopropyl phosphate + CO2 + NADH. It functions in the pathway cofactor biosynthesis; pyridoxine 5'-phosphate biosynthesis; pyridoxine 5'-phosphate from D-erythrose 4-phosphate: step 4/5. Functionally, catalyzes the NAD(P)-dependent oxidation of 4-(phosphooxy)-L-threonine (HTP) into 2-amino-3-oxo-4-(phosphooxy)butyric acid which spontaneously decarboxylates to form 3-amino-2-oxopropyl phosphate (AHAP). The sequence is that of 4-hydroxythreonine-4-phosphate dehydrogenase from Enterobacter sp. (strain 638).